Reading from the N-terminus, the 776-residue chain is DNA ligase (776 aa).

Residues 31–35 (DAEYD), 80–81 (SL), and Glu-112 contribute to the NAD(+) site. The N6-AMP-lysine intermediate role is filled by Lys-114. Arg-135, Glu-172, Lys-288, and Lys-312 together coordinate NAD(+). Residues Cys-406, Cys-409, Cys-436, and Cys-442 each coordinate Zn(2+). The 84-residue stretch at 693 to 776 (AEGLPLAGQT…VFLDEQGIAI (84 aa)) folds into the BRCT domain.

It belongs to the NAD-dependent DNA ligase family. LigA subfamily. Requires Mg(2+) as cofactor. Mn(2+) is required as a cofactor.

The catalysed reaction is NAD(+) + (deoxyribonucleotide)n-3'-hydroxyl + 5'-phospho-(deoxyribonucleotide)m = (deoxyribonucleotide)n+m + AMP + beta-nicotinamide D-nucleotide.. DNA ligase that catalyzes the formation of phosphodiester linkages between 5'-phosphoryl and 3'-hydroxyl groups in double-stranded DNA using NAD as a coenzyme and as the energy source for the reaction. It is essential for DNA replication and repair of damaged DNA. The sequence is that of DNA ligase from Pseudomonas putida (strain W619).